We begin with the raw amino-acid sequence, 205 residues long: DNA-directed RNA polymerase RPB5 homolog (205 aa).

This sequence belongs to the archaeal RpoH/eukaryotic RPB5 RNA polymerase subunit family. As to quaternary structure, part of the viral DNA-directed RNA polymerase that consists of 8 polII-like subunits (RPB1, RPB2, RPB3, RPB5, RPB6, RPB7, RPB9, RPB10), a capping enzyme and a termination factor.

The protein resides in the host cytoplasm. It is found in the virion. Its function is as follows. Component of the DNA-directed RNA polymerase (RNAP) that catalyzes the transcription in the cytoplasm of viral DNA into RNA using the four ribonucleoside triphosphates as substrates. In Ornithodoros (relapsing fever ticks), this protein is DNA-directed RNA polymerase RPB5 homolog.